Consider the following 25-residue polypeptide: Bifunctional chitinase/lysozyme (25 aa).

Belongs to the glycosyl hydrolase 19 family. Chitinase class I subfamily. In terms of assembly, monomer.

It is found in the secreted. The protein localises to the extracellular space. It catalyses the reaction Random endo-hydrolysis of N-acetyl-beta-D-glucosaminide (1-&gt;4)-beta-linkages in chitin and chitodextrins.. The catalysed reaction is Hydrolysis of (1-&gt;4)-beta-linkages between N-acetylmuramic acid and N-acetyl-D-glucosamine residues in a peptidoglycan and between N-acetyl-D-glucosamine residues in chitodextrins.. Bifunctional enzyme with lysozyme/chitinase activity. The sequence is that of Bifunctional chitinase/lysozyme from Carica papaya (Papaya).